The sequence spans 444 residues: DNA primase DnaG (444 aa).

A Toprim domain is found at 186 to 260 (DSIIVVEGRN…EVDFVARAPP (75 aa)). Residues glutamate 192, aspartate 234, and aspartate 236 each coordinate Mg(2+).

The protein belongs to the archaeal DnaG primase family. As to quaternary structure, forms a ternary complex with MCM helicase and DNA. Component of the archaeal exosome complex. Requires Mg(2+) as cofactor.

The catalysed reaction is ssDNA + n NTP = ssDNA/pppN(pN)n-1 hybrid + (n-1) diphosphate.. Its function is as follows. RNA polymerase that catalyzes the synthesis of short RNA molecules used as primers for DNA polymerase during DNA replication. Also part of the exosome, which is a complex involved in RNA degradation. Acts as a poly(A)-binding protein that enhances the interaction between heteromeric, adenine-rich transcripts and the exosome. This Thermoplasma volcanium (strain ATCC 51530 / DSM 4299 / JCM 9571 / NBRC 15438 / GSS1) protein is DNA primase DnaG.